Reading from the N-terminus, the 222-residue chain is Germin-like protein subfamily 1 member 16 (222 aa).

An N-terminal signal peptide occupies residues 1–22; that stretch reads MRVSQSLIPFAIIALVLSFVNA. Cys32 and Cys48 are joined by a disulfide. A Cupin type-1 domain is found at 62-213; that stretch reads SGLNVPGNTN…AFQLDANVVK (152 aa). Residue Asn77 is glycosylated (N-linked (GlcNAc...) asparagine). His110, His112, Glu117, and His159 together coordinate Mn(2+).

Belongs to the germin family. In terms of assembly, oligomer (believed to be a pentamer but probably hexamer).

The protein localises to the secreted. The protein resides in the extracellular space. It localises to the apoplast. In terms of biological role, may play a role in plant defense. Probably has no oxalate oxidase activity even if the active site is conserved. The sequence is that of Germin-like protein subfamily 1 member 16 from Arabidopsis thaliana (Mouse-ear cress).